The following is a 718-amino-acid chain: Probable GTP diphosphokinase RSH2, chloroplastic (718 aa).

Residues 1–68 constitute a chloroplast transit peptide; the sequence is MSVPAIAVYT…LFSSPTAAPR (68 aa). The disordered stretch occupies residues 9–48; sequence YTSPPGAVYTSSSSSELEASSRGSAPCATAAPPSPASSHR. Over residues 19-39 the composition is skewed to low complexity; it reads SSSSSELEASSRGSAPCATAA. The region spanning 243–347 is the HD domain; the sequence is YLQHCVETAV…IKLADRLHNM (105 aa).

The protein belongs to the RelA/SpoT family.

Its subcellular location is the plastid. The protein resides in the chloroplast. It catalyses the reaction GTP + ATP = guanosine 3'-diphosphate 5'-triphosphate + AMP. Its function is as follows. Probable ppGpp (guanosine 3'-diphosphate 5'-diphosphate) synthetase that may be involved in a rapid plant ppGpp-mediated response to pathogens and other stresses. The polypeptide is Probable GTP diphosphokinase RSH2, chloroplastic (RSH2) (Oryza sativa subsp. japonica (Rice)).